The following is a 228-amino-acid chain: Sec-independent protein translocase protein TatB (228 aa).

The helical transmembrane segment at 1–21 (MFDFGLGELVFVGIIALIVLG) threads the bilayer. 2 disordered regions span residues 109-162 (DFGV…AETD) and 197-228 (PHTT…VRKS). The span at 206-228 (AISRKRDFRPKHRAKPKLRVRKS) shows a compositional bias: basic residues.

Belongs to the TatB family. As to quaternary structure, the Tat system comprises two distinct complexes: a TatABC complex, containing multiple copies of TatA, TatB and TatC subunits, and a separate TatA complex, containing only TatA subunits. Substrates initially bind to the TatABC complex, which probably triggers association of the separate TatA complex to form the active translocon.

Its subcellular location is the cell inner membrane. In terms of biological role, part of the twin-arginine translocation (Tat) system that transports large folded proteins containing a characteristic twin-arginine motif in their signal peptide across membranes. Together with TatC, TatB is part of a receptor directly interacting with Tat signal peptides. TatB may form an oligomeric binding site that transiently accommodates folded Tat precursor proteins before their translocation. This chain is Sec-independent protein translocase protein TatB, found in Neisseria meningitidis serogroup B (strain ATCC BAA-335 / MC58).